Reading from the N-terminus, the 295-residue chain is Methionine aminopeptidase (295 aa).

Position 62 (His-62) interacts with substrate. Residues Asp-82, Asp-93, and His-153 each coordinate a divalent metal cation. His-161 serves as a coordination point for substrate. 2 residues coordinate a divalent metal cation: Glu-187 and Glu-280.

This sequence belongs to the peptidase M24A family. Methionine aminopeptidase archaeal type 2 subfamily. As to quaternary structure, monomer. Co(2+) serves as cofactor. It depends on Zn(2+) as a cofactor. The cofactor is Mn(2+). Fe(2+) is required as a cofactor.

It carries out the reaction Release of N-terminal amino acids, preferentially methionine, from peptides and arylamides.. Removes the N-terminal methionine from nascent proteins. The N-terminal methionine is often cleaved when the second residue in the primary sequence is small and uncharged (Met-Ala-, Cys, Gly, Pro, Ser, Thr, or Val). This chain is Methionine aminopeptidase, found in Pyrococcus abyssi (strain GE5 / Orsay).